Consider the following 343-residue polypeptide: Ribosomal RNA small subunit methyltransferase C (343 aa).

It belongs to the methyltransferase superfamily. RsmC family. As to quaternary structure, monomer.

Its subcellular location is the cytoplasm. It catalyses the reaction guanosine(1207) in 16S rRNA + S-adenosyl-L-methionine = N(2)-methylguanosine(1207) in 16S rRNA + S-adenosyl-L-homocysteine + H(+). Specifically methylates the guanine in position 1207 of 16S rRNA in the 30S particle. The sequence is that of Ribosomal RNA small subunit methyltransferase C from Escherichia coli O6:K15:H31 (strain 536 / UPEC).